Consider the following 153-residue polypeptide: Large ribosomal subunit protein uL22 (153 aa).

The interval 125–153 (EPKEARQARKKAKSGRPAAAAKSETEKGA) is disordered.

The protein belongs to the universal ribosomal protein uL22 family. As to quaternary structure, part of the 50S ribosomal subunit.

Its function is as follows. This protein binds specifically to 23S rRNA; its binding is stimulated by other ribosomal proteins, e.g. L4, L17, and L20. It is important during the early stages of 50S assembly. It makes multiple contacts with different domains of the 23S rRNA in the assembled 50S subunit and ribosome. In terms of biological role, the globular domain of the protein is located near the polypeptide exit tunnel on the outside of the subunit, while an extended beta-hairpin is found that lines the wall of the exit tunnel in the center of the 70S ribosome. In Cutibacterium acnes (strain DSM 16379 / KPA171202) (Propionibacterium acnes), this protein is Large ribosomal subunit protein uL22.